The primary structure comprises 144 residues: Large ribosomal subunit protein uL15 (144 aa).

Residues 1–53 (MRLNTLSPAQGAKQAPKRVGRGIGSGLGKTGGRGHKGQNSRTGGGVRRGFEGG) form a disordered region. The span at 21 to 31 (RGIGSGLGKTG) shows a compositional bias: gly residues.

This sequence belongs to the universal ribosomal protein uL15 family. Part of the 50S ribosomal subunit.

Functionally, binds to the 23S rRNA. This chain is Large ribosomal subunit protein uL15, found in Hamiltonella defensa subsp. Acyrthosiphon pisum (strain 5AT).